A 593-amino-acid chain; its full sequence is Aspartate--tRNA(Asp/Asn) ligase (593 aa).

Position 176 (E176) interacts with L-aspartate. The segment at 200-203 (QIFK) is aspartate. L-aspartate is bound at residue R222. Residues 222-224 (RDE) and Q231 contribute to the ATP site. H450 is an L-aspartate binding site. E490 is a binding site for ATP. L-aspartate is bound at residue R497. An ATP-binding site is contributed by 542–545 (GLDR).

It belongs to the class-II aminoacyl-tRNA synthetase family. Type 1 subfamily. Homodimer.

Its subcellular location is the cytoplasm. The enzyme catalyses tRNA(Asx) + L-aspartate + ATP = L-aspartyl-tRNA(Asx) + AMP + diphosphate. Aspartyl-tRNA synthetase with relaxed tRNA specificity since it is able to aspartylate not only its cognate tRNA(Asp) but also tRNA(Asn). Reaction proceeds in two steps: L-aspartate is first activated by ATP to form Asp-AMP and then transferred to the acceptor end of tRNA(Asp/Asn). This chain is Aspartate--tRNA(Asp/Asn) ligase, found in Symbiobacterium thermophilum (strain DSM 24528 / JCM 14929 / IAM 14863 / T).